We begin with the raw amino-acid sequence, 1484 residues long: Ral GTPase-activating protein subunit beta (1484 aa).

Disordered regions lie at residues 355-437 and 699-728; these read PRSD…APRR and ENNL…PDSE. Position 359 is a phosphoserine (Ser-359). Phosphothreonine is present on residues Thr-363 and Thr-379. 3 stretches are compositionally biased toward polar residues: residues 369-381, 392-428, and 701-725; these read SMPQ…TTPP, NKAT…TSSE, and NLKS…PTTP. Phosphoserine is present on residues Ser-421 and Ser-710. A Phosphothreonine modification is found at Thr-724. The region spanning 1138–1382 is the Rap-GAP domain; it reads IGYLDLLPCR…TTLEKEVPVI (245 aa). A Phosphoserine modification is found at Ser-1275. The tract at residues 1297–1325 is disordered; that stretch reads PNHTDSLNSSQRLSPSSRMKKLPQGRPVP. Low complexity predominate over residues 1302–1313; it reads SLNSSQRLSPSS.

In terms of assembly, component of the heterodimeric RalGAP1 complex with RALGAPA1 and of the heterodimeric RalGAP2 complex with RALGAPA2. Heterodimerization is required for activity. In terms of tissue distribution, abundantly expressed in testis, pancreas, lung, thymus, brown fat, and white fat. Expressed at lower levels in the brain.

Functionally, non-catalytic subunit of the heterodimeric RalGAP1 and RalGAP2 complexes which act as GTPase activators for the Ras-like small GTPases RALA and RALB. The chain is Ral GTPase-activating protein subunit beta (Ralgapb) from Mus musculus (Mouse).